Consider the following 729-residue polypeptide: Beta-galactosidase 4 (729 aa).

The signal sequence occupies residues Met1 to Asn35. Glu194 (proton donor) is an active-site residue. The active-site Nucleophile is Glu263.

The protein belongs to the glycosyl hydrolase 35 family.

It is found in the secreted. The protein localises to the extracellular space. It localises to the apoplast. The catalysed reaction is Hydrolysis of terminal non-reducing beta-D-galactose residues in beta-D-galactosides.. This Oryza sativa subsp. japonica (Rice) protein is Beta-galactosidase 4.